Reading from the N-terminus, the 419-residue chain is Octopressin receptor (419 aa).

Residues 1-37 (MENFTEENLHPWITTTTRVYNNVTIFPQYDDELGKFE) lie on the Extracellular side of the membrane. Asn3 and Asn22 each carry an N-linked (GlcNAc...) asparagine glycan. Residues 38–58 (IMVLCILCFMALFGNAVVLIV) traverse the membrane as a helical segment. Topologically, residues 59–80 (LRIKKTTLTRMQLLIVYLSVTD) are cytoplasmic. Residues 81–101 (ISVALFHILPTIILKINVYFL) form a helical membrane-spanning segment. Over 102–108 (GDISACR) the chain is Extracellular. A disulfide bridge connects residues Cys107 and Cys182. Residues 109-129 (VYQFITVAELYASSFVLIVTA) form a helical membrane-spanning segment. Over 130-153 (LDRYISICHPLAAHMWTNRRVHMT) the chain is Cytoplasmic. A helical transmembrane segment spans residues 154–174 (TALALFLALMCSLPQLDAVLV). Topologically, residues 175–192 (DFHGGKLCRPNLTTELAN) are extracellular. A glycan (N-linked (GlcNAc...) asparagine) is linked at Asn185. A helical membrane pass occupies residues 193–213 (IAYSWWAFCSVFFVPLLLLIF). At 214 to 292 (FYGRICFVVW…VSKSKIKTIK (79 aa)) the chain is on the cytoplasmic side. Residues 253 to 274 (SQTSSENRVKNYSDARDKDSSR) are disordered. The segment covering 259-274 (NRVKNYSDARDKDSSR) has biased composition (basic and acidic residues). Residues 293–313 (LTFSVVACFIICYTPFFTVLM) traverse the membrane as a helical segment. Topologically, residues 314 to 329 (ARTYDAELSSAQTPAL) are extracellular. A helical membrane pass occupies residues 330–350 (VILSLLPSLNSCTNPWIYLAF). The Cytoplasmic segment spans residues 351–419 (SGKVWCRQQS…TTALMSSSPC (69 aa)).

Belongs to the G-protein coupled receptor 1 family. Vasopressin/oxytocin receptor subfamily. As to expression, present in the nervous system and peripheral tissues.

Its subcellular location is the cell membrane. Functionally, acts as a receptor for octopressin. This chain is Octopressin receptor, found in Octopus vulgaris (Common octopus).